The primary structure comprises 439 residues: Ribosomal protein uS12 methylthiotransferase RimO (439 aa).

An MTTase N-terminal domain is found at 7–119 (KQLCLISLGC…IDILIAKKQN (113 aa)). The [4Fe-4S] cluster site is built by cysteine 16, cysteine 50, cysteine 82, cysteine 151, cysteine 155, and cysteine 158. The 232-residue stretch at 137-368 (TGSSVHAYVK…ALKHQNHSFK (232 aa)) folds into the Radical SAM core domain.

This sequence belongs to the methylthiotransferase family. RimO subfamily. [4Fe-4S] cluster is required as a cofactor.

Its subcellular location is the cytoplasm. The catalysed reaction is L-aspartate(89)-[ribosomal protein uS12]-hydrogen + (sulfur carrier)-SH + AH2 + 2 S-adenosyl-L-methionine = 3-methylsulfanyl-L-aspartate(89)-[ribosomal protein uS12]-hydrogen + (sulfur carrier)-H + 5'-deoxyadenosine + L-methionine + A + S-adenosyl-L-homocysteine + 2 H(+). In terms of biological role, catalyzes the methylthiolation of an aspartic acid residue of ribosomal protein uS12. This chain is Ribosomal protein uS12 methylthiotransferase RimO, found in Helicobacter pylori (strain HPAG1).